A 715-amino-acid chain; its full sequence is Interferon-induced GTP-binding protein Mx2 (715 aa).

Over residues 1–14 (MSKAHKSWPHRRRN) the composition is skewed to basic residues. Disordered stretches follow at residues 1–24 (MSKA…SLKK) and 69–88 (NNQP…PENN). Positions 69 to 80 (NNQPLPGNTSQP) are enriched in polar residues. A Dynamin-type G domain is found at 115–387 (DLALPAIAVI…LITHIQKSLP (273 aa)). Residues 125–132 (GDQSSGKS) form a G1 motif region. Position 125–132 (125–132 (GDQSSGKS)) interacts with GTP. The interval 150-152 (VTR) is G2 motif. The G3 motif stretch occupies residues 225–228 (DLPG). Residues 225-229 (DLPGI) and 294-297 (TKPD) each bind GTP. The interval 294-297 (TKPD) is G4 motif. Residues 326-329 (KCRG) form a G5 motif region. The GED domain occupies 623 to 714 (FNEIGVHLNA…ALCQFSSKEI (92 aa)).

The protein belongs to the TRAFAC class dynamin-like GTPase superfamily. Dynamin/Fzo/YdjA family.

The protein resides in the cytoplasm. The protein localises to the nucleus. Functionally, interferon-induced dynamin-like GTPase with antiviral activity. The protein is Interferon-induced GTP-binding protein Mx2 (MX2) of Macaca mulatta (Rhesus macaque).